Reading from the N-terminus, the 3587-residue chain is Tyrocidine synthase 2 (3587 aa).

The domain 1 (Proline-activating) stretch occupies residues 466-1045; sequence AATMHELFSR…IQALAAYVEG (580 aa). 2 Carrier domains span residues 972–1047 and 2007–2082; these read APTT…EGGE and APAT…EHSE. O-(pantetheine 4'-phosphoryl)serine occurs at positions 1007 and 2042. Residues 1522–2081 are domain 2 (Phenylalanine-activating); the sequence is EQTAVVFGDK…RDLARLIEHS (560 aa). Positions 2540–3122 are domain 3 (D-phenylalanine-activating); the sequence is YRADQTIQQL…NSRESEQGVV (583 aa). The disordered stretch occupies residues 3017-3040; the sequence is NDKIDRKALPKPNQEENRTEQYAA. Basic and acidic residues predominate over residues 3018-3035; that stretch reads DKIDRKALPKPNQEENRT. One can recognise a Carrier 3 domain in the interval 3040–3114; it reads APQTELEQLL…EAALRVIPNS (75 aa). S3075 carries the post-translational modification O-(pantetheine 4'-phosphoryl)serine.

This sequence belongs to the ATP-dependent AMP-binding enzyme family. In terms of assembly, large multienzyme complex of TycA, TycB and TycC. The cofactor is pantetheine 4'-phosphate.

The catalysed reaction is L-phenylalanine + ATP + H2O = D-phenylalanine + AMP + diphosphate + H(+). It functions in the pathway antibiotic biosynthesis; tyrocidine biosynthesis. Activates the second to fourth amino acids in tyrocidine (in tyrocidine A, Pro, Phe, and D-Phe) and epimerizes the last one. This is Tyrocidine synthase 2 (tycB) from Brevibacillus parabrevis.